Reading from the N-terminus, the 362-residue chain is Molybdenum import ATP-binding protein ModC (362 aa).

An ABC transporter domain is found at 4–238 (AGEAAIRARF…LDLPIRLGED (235 aa)). Residue 38–45 (GHSGSGKT) participates in ATP binding. The 66-residue stretch at 297-362 (GTSILNTLPA…AQIKAVALVG (66 aa)) folds into the Mop domain.

Belongs to the ABC transporter superfamily. Molybdate importer (TC 3.A.1.8) family. The complex is composed of two ATP-binding proteins (ModC), two transmembrane proteins (ModB) and a solute-binding protein (ModA).

The protein localises to the cell inner membrane. It carries out the reaction molybdate(out) + ATP + H2O = molybdate(in) + ADP + phosphate + H(+). Its function is as follows. Part of the ABC transporter complex ModABC involved in molybdenum import. Responsible for energy coupling to the transport system. This chain is Molybdenum import ATP-binding protein ModC, found in Thiobacillus denitrificans (strain ATCC 25259 / T1).